Consider the following 226-residue polypeptide: Cytidylate kinase (226 aa).

ATP is bound at residue 10–18; it reads GPAGAGKST.

Belongs to the cytidylate kinase family. Type 1 subfamily.

The protein resides in the cytoplasm. It catalyses the reaction CMP + ATP = CDP + ADP. It carries out the reaction dCMP + ATP = dCDP + ADP. In Caldicellulosiruptor saccharolyticus (strain ATCC 43494 / DSM 8903 / Tp8T 6331), this protein is Cytidylate kinase.